The following is a 273-amino-acid chain: ATP synthase F(1) complex subunit gamma, mitochondrial (273 aa).

Residue Lys14 is modified to N6-acetyllysine. Lys24 carries the post-translational modification N6-succinyllysine. Lys30 is subject to N6-acetyllysine. Lys90 carries the post-translational modification N6-acetyllysine; alternate. Lys90 carries the post-translational modification N6-succinyllysine; alternate. N6-acetyllysine is present on Lys113. Residue Ser121 is modified to Phosphoserine. Position 129 is an N6-acetyllysine; alternate (Lys129). Lys129 is subject to N6-succinyllysine; alternate. Residue Lys172 is modified to N6-acetyllysine. Position 245 is an N6-succinyllysine (Lys245).

It belongs to the ATPase gamma chain family. In terms of assembly, component of the ATP synthase complex composed at least of ATP5F1A/subunit alpha, ATP5F1B/subunit beta, ATP5MC1/subunit c (homooctomer), MT-ATP6/subunit a, MT-ATP8/subunit 8, ATP5ME/subunit e, ATP5MF/subunit f, ATP5MG/subunit g, ATP5MK/subunit k, ATP5MJ/subunit j, ATP5F1C/subunit gamma, ATP5F1D/subunit delta, ATP5F1E/subunit epsilon, ATP5PF/subunit F6, ATP5PB/subunit b, ATP5PD/subunit d, ATP5PO/subunit OSCP. ATP synthase complex consists of a soluble F(1) head domain (subunits alpha(3) and beta(3)) - the catalytic core - and a membrane F(0) domain - the membrane proton channel (subunits c, a, 8, e, f, g, k and j). These two domains are linked by a central stalk (subunits gamma, delta, and epsilon) rotating inside the F1 region and a stationary peripheral stalk (subunits F6, b, d, and OSCP). Interacts with FLVCR2; this interaction occurs in the absence of heme and is disrupted upon heme binding.

Its subcellular location is the mitochondrion inner membrane. In terms of biological role, subunit gamma, of the mitochondrial membrane ATP synthase complex (F(1)F(0) ATP synthase or Complex V) that produces ATP from ADP in the presence of a proton gradient across the membrane which is generated by electron transport complexes of the respiratory chain. ATP synthase complex consist of a soluble F(1) head domain - the catalytic core - and a membrane F(1) domain - the membrane proton channel. These two domains are linked by a central stalk rotating inside the F(1) region and a stationary peripheral stalk. During catalysis, ATP synthesis in the catalytic domain of F(1) is coupled via a rotary mechanism of the central stalk subunits to proton translocation. In vivo, can only synthesize ATP although its ATP hydrolase activity can be activated artificially in vitro. With the central stalk subunit delta, is essential for the biogenesis of F(1) catalytic part of the ATP synthase complex namely in the formation of F1 assembly intermediate. This Rattus norvegicus (Rat) protein is ATP synthase F(1) complex subunit gamma, mitochondrial.